The primary structure comprises 78 residues: Small ribosomal subunit protein uS15 (78 aa).

Belongs to the universal ribosomal protein uS15 family. Part of the 30S ribosomal subunit. Forms a bridge to the 50S subunit in the 70S ribosome, contacting the 23S rRNA.

Its function is as follows. One of the primary rRNA binding proteins, it binds directly to 16S rRNA where it helps nucleate assembly of the platform of the 30S subunit by binding and bridging several RNA helices of the 16S rRNA. Forms an intersubunit bridge (bridge B4) with the 23S rRNA of the 50S subunit in the ribosome. This chain is Small ribosomal subunit protein uS15, found in Karelsulcia muelleri (strain GWSS) (Sulcia muelleri).